A 155-amino-acid polypeptide reads, in one-letter code: Ribosomal RNA large subunit methyltransferase H (155 aa).

S-adenosyl-L-methionine-binding positions include leucine 72, glycine 103, and 122 to 127; that span reads LSALTL.

It belongs to the RNA methyltransferase RlmH family. Homodimer.

The protein resides in the cytoplasm. It catalyses the reaction pseudouridine(1915) in 23S rRNA + S-adenosyl-L-methionine = N(3)-methylpseudouridine(1915) in 23S rRNA + S-adenosyl-L-homocysteine + H(+). Functionally, specifically methylates the pseudouridine at position 1915 (m3Psi1915) in 23S rRNA. This is Ribosomal RNA large subunit methyltransferase H from Cronobacter sakazakii (strain ATCC BAA-894) (Enterobacter sakazakii).